A 288-amino-acid chain; its full sequence is Phytanoyl-CoA dioxygenase domain-containing protein 1 homolog (288 aa).

2-oxoglutarate-binding positions include Lys95, Met134, 149 to 151, and Trp167; that span reads HVD. Fe cation contacts are provided by His149 and Asp151. His242 lines the Fe cation pocket. Ser244 and Arg253 together coordinate 2-oxoglutarate.

The protein belongs to the PhyH family. PHYHD1 subfamily. Fe cation is required as a cofactor.

Has alpha-ketoglutarate-dependent dioxygenase activity. Does not show detectable activity towards fatty acid CoA thioesters. Is not expected to be active with phytanoyl CoA. The sequence is that of Phytanoyl-CoA dioxygenase domain-containing protein 1 homolog from Caenorhabditis elegans.